The chain runs to 76 residues: Cytochrome c oxidase subunit 6C-1 (76 aa).

Topologically, residues 2 to 10 (SLAKPAMRG) are mitochondrial matrix. Residues 11–51 (LLGKRLRFHLPIAFTLSLVAALGFKYGVTEPRKQAYADFYK) traverse the membrane as a helical segment. The Mitochondrial intermembrane portion of the chain corresponds to 52-76 (QYDAVKDFNAMREAGIFESVRPSGE).

This sequence belongs to the cytochrome c oxidase subunit 6c family. As to quaternary structure, component of the cytochrome c oxidase (complex IV, CIV), a multisubunit enzyme composed of 14 subunits. The complex is composed of a catalytic core of 3 subunits MT-CO1, MT-CO2 and MT-CO3, encoded in the mitochondrial DNA, and 11 supernumerary subunits COX4I, COX5A, COX5B, COX6A, COX6B, COX6C, COX7A, COX7B, COX7C, COX8 and NDUFA4, which are encoded in the nuclear genome. The complex exists as a monomer or a dimer and forms supercomplexes (SCs) in the inner mitochondrial membrane with NADH-ubiquinone oxidoreductase (complex I, CI) and ubiquinol-cytochrome c oxidoreductase (cytochrome b-c1 complex, complex III, CIII), resulting in different assemblies (supercomplex SCI(1)III(2)IV(1) and megacomplex MCI(2)III(2)IV(2)).

Its subcellular location is the mitochondrion inner membrane. Its pathway is energy metabolism; oxidative phosphorylation. In terms of biological role, component of the cytochrome c oxidase, the last enzyme in the mitochondrial electron transport chain which drives oxidative phosphorylation. The respiratory chain contains 3 multisubunit complexes succinate dehydrogenase (complex II, CII), ubiquinol-cytochrome c oxidoreductase (cytochrome b-c1 complex, complex III, CIII) and cytochrome c oxidase (complex IV, CIV), that cooperate to transfer electrons derived from NADH and succinate to molecular oxygen, creating an electrochemical gradient over the inner membrane that drives transmembrane transport and the ATP synthase. Cytochrome c oxidase is the component of the respiratory chain that catalyzes the reduction of oxygen to water. Electrons originating from reduced cytochrome c in the intermembrane space (IMS) are transferred via the dinuclear copper A center (CU(A)) of subunit 2 and heme A of subunit 1 to the active site in subunit 1, a binuclear center (BNC) formed by heme A3 and copper B (CU(B)). The BNC reduces molecular oxygen to 2 water molecules using 4 electrons from cytochrome c in the IMS and 4 protons from the mitochondrial matrix. This chain is Cytochrome c oxidase subunit 6C-1, found in Thunnus obesus (Bigeye tuna).